Here is a 387-residue protein sequence, read N- to C-terminus: MEQVVIVDAIRTPMGRSKGGAFRNVRAEDLSAHLMRSLLARNPSLTAATLDDIYWGCVQQTLEQGFNIARNAALLAEIPHSVPAVTVNRLCGSSMQALHDAARMIMTGDAQVCLVGGVEHMGHVPMSHGVDFHPGLSRNVAKAAGMMGLTAEMLSRLHGISREMQDQFAARSHARAWAATQSGAFKTEIIPTGGHDADGVLKQFNYDEVIRPETTVEALSTLRPAFDPVSGTVTAGTSSALSDGAAAMLVMSESRARELGLKPRARIRSMAVVGCDPSIMGYGPVPASKLALKKAGLSASDIDVFEMNEAFAAQILPCIKDLGLMEQIDEKINLNGGAIALGHPLGCSGARISTTLINLMERKDAQFGLATMCIGLGQGIATVFERV.

Residue C91 is the Acyl-thioester intermediate of the active site. Residues H343 and C373 each act as proton acceptor in the active site.

This sequence belongs to the thiolase-like superfamily. Thiolase family. As to quaternary structure, heterotetramer of two alpha chains (FadB) and two beta chains (FadA).

The protein localises to the cytoplasm. It carries out the reaction an acyl-CoA + acetyl-CoA = a 3-oxoacyl-CoA + CoA. It participates in lipid metabolism; fatty acid beta-oxidation. Catalyzes the final step of fatty acid oxidation in which acetyl-CoA is released and the CoA ester of a fatty acid two carbons shorter is formed. This is 3-ketoacyl-CoA thiolase from Salmonella paratyphi A (strain ATCC 9150 / SARB42).